Consider the following 433-residue polypeptide: Enolase (433 aa).

Residue glutamine 164 participates in (2R)-2-phosphoglycerate binding. The Proton donor role is filled by glutamate 206. Aspartate 243, glutamate 289, and aspartate 316 together coordinate Mg(2+). Residues lysine 341, arginine 370, serine 371, and lysine 392 each coordinate (2R)-2-phosphoglycerate. Lysine 341 (proton acceptor) is an active-site residue.

It belongs to the enolase family. The cofactor is Mg(2+).

Its subcellular location is the cytoplasm. The protein localises to the secreted. It is found in the cell surface. The enzyme catalyses (2R)-2-phosphoglycerate = phosphoenolpyruvate + H2O. The protein operates within carbohydrate degradation; glycolysis; pyruvate from D-glyceraldehyde 3-phosphate: step 4/5. Catalyzes the reversible conversion of 2-phosphoglycerate (2-PG) into phosphoenolpyruvate (PEP). It is essential for the degradation of carbohydrates via glycolysis. In Borrelia hermsii (strain HS1 / DAH), this protein is Enolase.